The sequence spans 436 residues: T-box transcription factor TBX6 (436 aa).

Positions 100-273 form a DNA-binding region, T-box; it reads LWKEFSSVGT…ANPFAKGFRE (174 aa). Residues 271–284 show a composition bias toward basic and acidic residues; the sequence is FRENGRNCKRERDA. 2 disordered regions span residues 271–339 and 360–379; these read FREN…APAP and PSHL…SGRS. Low complexity predominate over residues 325–339; the sequence is EQAPAPGEATAAPAP.

Forms a dimeric complex with DNA (in vitro). Expressed in fetal tail bud, posterior spinal tissue, intervertebral disk and testis. Also expressed in adult testis, kidney, lung, muscle and thymus.

It is found in the nucleus. T-box transcription factor that plays an essential role in the determination of the fate of axial stem cells: neural vs mesodermal. Acts in part by down-regulating, a specific enhancer (N1) of SOX2, to inhibit neural development. Seems to play also an essential role in left/right axis determination and acts through effects on Notch signaling around the node as well as through an effect on the morphology and motility of the nodal cilia. This Homo sapiens (Human) protein is T-box transcription factor TBX6 (TBX6).